Consider the following 135-residue polypeptide: Cilia- and flagella-associated protein 144 (135 aa).

The disordered stretch occupies residues 76–100; sequence QGPKKKYSETQTEAQEIGWDPNPLI.

The protein belongs to the CFAP144 family. In terms of assembly, microtubule inner protein component of sperm flagellar doublet microtubules. As to expression, predominantly expressed in tissues containing motile cilia.

It is found in the cytoplasm. It localises to the cytoskeleton. The protein localises to the cilium axoneme. The protein resides in the flagellum axoneme. The sequence is that of Cilia- and flagella-associated protein 144 from Mus musculus (Mouse).